A 193-amino-acid polypeptide reads, in one-letter code: Putative RING finger protein ORF38 (193 aa).

Residues 12-50 (CCICLDDEDVDRDNTIPCRHTVCRTCYVKPMLDQCPVCR) form an RING-type zinc finger.

The polypeptide is Putative RING finger protein ORF38 (Magallana gigas (Pacific oyster)).